The primary structure comprises 299 residues: Anti-sigma-D factor RsdA (299 aa).

The helical transmembrane segment at 86–106 threads the bilayer; sequence LAAVGSVAAALLVLSGFGAVV. The disordered stretch occupies residues 187-299; sequence NTKVETRDPN…APETPVSPTH (113 aa). Composition is skewed to low complexity over residues 201–212 and 250–271; these read PGSPSNPAAPGS and PNST…EPGS.

In terms of assembly, interacts with ECF RNA polymerase sigma factor SigD; this should inhibit the interaction of SigD with the RNA polymerase catalytic core. In terms of processing, the cytosolic fragment is degraded by a ClpP1-ClpP2-ClpX complex, as would be expected after S1P and S2P intramembrane proteolysis. This releases SigD so that it may bind to the RNA polymerase catalytic core.

It is found in the cell membrane. In terms of biological role, an anti-sigma factor for extracytoplasmic function (ECF) sigma factor SigD. ECF sigma factors are held in an inactive form by an anti-sigma factor until released by regulated intramembrane proteolysis (RIP). RIP occurs when an extracytoplasmic signal triggers a concerted proteolytic cascade to transmit information and elicit cellular responses. The membrane-spanning regulatory substrate protein is first cut extracytoplasmically (site-1 protease, S1P), then within the membrane itself (site-2 protease, S2P), while cytoplasmic proteases finish degrading the regulatory protein, liberating the sigma factor. Neither S1P nor S2P proteases have been so far identified for this anti-sigma factor. In Mycobacterium bovis (strain ATCC BAA-935 / AF2122/97), this protein is Anti-sigma-D factor RsdA (rsda).